Here is a 421-residue protein sequence, read N- to C-terminus: Magnesium transporter MRS2-5 (421 aa).

2 helical membrane passes run 357-377 and 393-413; these read LLLT…AVFG and YVLL…VLYF. The Required for magnesium transport activity motif lies at 377–379; that stretch reads GMN.

Belongs to the CorA metal ion transporter (MIT) (TC 1.A.35.5) family. As to expression, expressed in the whole plant.

It localises to the membrane. In terms of biological role, magnesium transporter that may mediate the influx of magnesium. The sequence is that of Magnesium transporter MRS2-5 (MRS2-5) from Arabidopsis thaliana (Mouse-ear cress).